The sequence spans 489 residues: ATP-dependent zinc metalloprotease FtsH 3 (489 aa).

At 1 to 14 (MNPRPVRPGGSLQQ) the chain is on the cytoplasmic side. A helical membrane pass occupies residues 15–31 (SLLALGSLSVAVGLAVW). Topologically, residues 32–489 (QQRTLGRGRS…GPRPARPAMN (458 aa)) are extracellular. 95–102 (GPPGTGKT) provides a ligand contact to ATP. Histidine 315 is a binding site for Zn(2+). The active site involves glutamate 316. Zn(2+) contacts are provided by histidine 319 and aspartate 391.

In the central section; belongs to the AAA ATPase family. It in the C-terminal section; belongs to the peptidase M41 family. Homohexamer. Zn(2+) serves as cofactor.

Its subcellular location is the cell membrane. In terms of biological role, acts as a processive, ATP-dependent zinc metallopeptidase for both cytoplasmic and membrane proteins. Plays a role in the quality control of integral membrane proteins. The polypeptide is ATP-dependent zinc metalloprotease FtsH 3 (Sphaerobacter thermophilus (strain ATCC 49802 / DSM 20745 / KCCM 41009 / NCIMB 13125 / S 6022)).